The primary structure comprises 359 residues: Phospho-N-acetylmuramoyl-pentapeptide-transferase (359 aa).

The next 10 helical transmembrane spans lie at 3–23 (QIMI…PALI), 55–75 (VAIL…GLAF), 80–100 (ITAS…VGFL), 117–137 (TAKT…VLQF), 156–176 (IATV…VVSA), 187–207 (LDGL…LITF), 231–251 (LALI…WNAA), 255–275 (IFMG…LSVT), 280–300 (ILAV…VLQI), and 334–354 (FWLL…GEWL).

Belongs to the glycosyltransferase 4 family. MraY subfamily. It depends on Mg(2+) as a cofactor.

It is found in the cell membrane. The enzyme catalyses UDP-N-acetyl-alpha-D-muramoyl-L-alanyl-gamma-D-glutamyl-meso-2,6-diaminopimeloyl-D-alanyl-D-alanine + di-trans,octa-cis-undecaprenyl phosphate = di-trans,octa-cis-undecaprenyl diphospho-N-acetyl-alpha-D-muramoyl-L-alanyl-D-glutamyl-meso-2,6-diaminopimeloyl-D-alanyl-D-alanine + UMP. It functions in the pathway cell wall biogenesis; peptidoglycan biosynthesis. Functionally, catalyzes the initial step of the lipid cycle reactions in the biosynthesis of the cell wall peptidoglycan: transfers peptidoglycan precursor phospho-MurNAc-pentapeptide from UDP-MurNAc-pentapeptide onto the lipid carrier undecaprenyl phosphate, yielding undecaprenyl-pyrophosphoryl-MurNAc-pentapeptide, known as lipid I. This Mycobacterium ulcerans (strain Agy99) protein is Phospho-N-acetylmuramoyl-pentapeptide-transferase.